Reading from the N-terminus, the 291-residue chain is E3 ubiquitin-protein ligase RZFP34 (291 aa).

The segment at 20-96 adopts a CHY-type zinc-finger fold; the sequence is IGSGHYGCSH…VQQNCSNCGV (77 aa). Residues Cys-27, His-29, Cys-40, Cys-41, Cys-47, Cys-50, His-51, His-66, Cys-78, Cys-81, Cys-91, Cys-94, Cys-103, Cys-106, His-119, Cys-120, Cys-123, Cys-126, His-136, Cys-137, Cys-140, Cys-143, His-152, and Cys-154 each coordinate Zn(2+). A CTCHY-type zinc finger spans residues 98-162; that stretch reads MGKYFCSKCK…QCVEGAMHHN (65 aa). The RING-type; atypical zinc finger occupies 163–206; the sequence is CPVCFEYLFDSTRDITVLRCGHTMHLECTKDMGLHNRYTCPVCS. The residue at position 173 (Ser-173) is a Phosphoserine. Thr-178 bears the Phosphothreonine mark. The residue at position 208 (Ser-208) is a Phosphoserine. Residues 271-291 form a disordered region; that stretch reads QRGSDSHSCSSGMPQVVGSTG.

In terms of assembly, interacts with SRK2D/2SNRK2.2, SRK2I/SNRK2.3 and SRK2E/SNRK2.6. In terms of processing, phosphorylated at Ser-173, Thr-178 and Ser-208 by SRK2E/SNRK2.6 in response to abscisic acid (ABA). Phosphorylation activates its E3 ubiquitin-protein ligase activity. In terms of tissue distribution, expressed in roots, leaves, and anthers and stigma of open flowers.

The protein resides in the nucleus. It is found in the cytoplasm. It localises to the endoplasmic reticulum. It carries out the reaction S-ubiquitinyl-[E2 ubiquitin-conjugating enzyme]-L-cysteine + [acceptor protein]-L-lysine = [E2 ubiquitin-conjugating enzyme]-L-cysteine + N(6)-ubiquitinyl-[acceptor protein]-L-lysine.. It participates in protein modification; protein ubiquitination. Its function is as follows. Possesses E3 ubiquitin-protein ligase activity in vitro. Mediates mainly 'Lys-48'-linked polyubiquitination. Promotes abscisic acid (ABA)-induced stomatal closure, reactive oxygen species (ROS) production and drought tolerance. Involved in the regulation of stomatal aperture. This Arabidopsis thaliana (Mouse-ear cress) protein is E3 ubiquitin-protein ligase RZFP34.